The sequence spans 178 residues: Peptide methionine sulfoxide reductase MsrA (178 aa).

Cysteine 14 is an active-site residue.

It belongs to the MsrA Met sulfoxide reductase family.

It catalyses the reaction L-methionyl-[protein] + [thioredoxin]-disulfide + H2O = L-methionyl-(S)-S-oxide-[protein] + [thioredoxin]-dithiol. The catalysed reaction is [thioredoxin]-disulfide + L-methionine + H2O = L-methionine (S)-S-oxide + [thioredoxin]-dithiol. Its function is as follows. Has an important function as a repair enzyme for proteins that have been inactivated by oxidation. Catalyzes the reversible oxidation-reduction of methionine sulfoxide in proteins to methionine. This is Peptide methionine sulfoxide reductase MsrA from Bacillus pumilus (strain SAFR-032).